The chain runs to 158 residues: Flagellar assembly factor FliW (158 aa).

It belongs to the FliW family. In terms of assembly, interacts with translational regulator CsrA and flagellin(s).

Its subcellular location is the cytoplasm. In terms of biological role, acts as an anti-CsrA protein, binds CsrA and prevents it from repressing translation of its target genes, one of which is flagellin. Binds to flagellin and participates in the assembly of the flagellum. In Moorella thermoacetica (strain ATCC 39073 / JCM 9320), this protein is Flagellar assembly factor FliW.